The chain runs to 962 residues: Glycine dehydrogenase (decarboxylating) (962 aa).

Lys-709 carries the N6-(pyridoxal phosphate)lysine modification.

Belongs to the GcvP family. As to quaternary structure, the glycine cleavage system is composed of four proteins: P, T, L and H. The cofactor is pyridoxal 5'-phosphate.

It catalyses the reaction N(6)-[(R)-lipoyl]-L-lysyl-[glycine-cleavage complex H protein] + glycine + H(+) = N(6)-[(R)-S(8)-aminomethyldihydrolipoyl]-L-lysyl-[glycine-cleavage complex H protein] + CO2. Its function is as follows. The glycine cleavage system catalyzes the degradation of glycine. The P protein binds the alpha-amino group of glycine through its pyridoxal phosphate cofactor; CO(2) is released and the remaining methylamine moiety is then transferred to the lipoamide cofactor of the H protein. In Shewanella sp. (strain MR-4), this protein is Glycine dehydrogenase (decarboxylating).